A 591-amino-acid polypeptide reads, in one-letter code: Aspartate--tRNA ligase (591 aa).

Glu-171 is an L-aspartate binding site. Residues 195–198 (QLFK) are aspartate. L-aspartate is bound at residue Arg-217. Residues 217 to 219 (RDE) and Gln-226 contribute to the ATP site. Residue His-448 coordinates L-aspartate. Position 482 (Glu-482) interacts with ATP. Arg-489 is a binding site for L-aspartate. 534-537 (GLDR) lines the ATP pocket.

Belongs to the class-II aminoacyl-tRNA synthetase family. Type 1 subfamily. In terms of assembly, homodimer.

The protein resides in the cytoplasm. It carries out the reaction tRNA(Asp) + L-aspartate + ATP = L-aspartyl-tRNA(Asp) + AMP + diphosphate. Catalyzes the attachment of L-aspartate to tRNA(Asp) in a two-step reaction: L-aspartate is first activated by ATP to form Asp-AMP and then transferred to the acceptor end of tRNA(Asp). This Vibrio cholerae serotype O1 (strain ATCC 39541 / Classical Ogawa 395 / O395) protein is Aspartate--tRNA ligase.